Here is a 523-residue protein sequence, read N- to C-terminus: 3-hydroxybenzoate--CoA ligase (523 aa).

It belongs to the ATP-dependent AMP-binding enzyme family. Benzoate-CoA ligase subfamily.

The catalysed reaction is 3-hydroxybenzoate + ATP + CoA = 3-hydroxybenzoyl-CoA + AMP + diphosphate. The enzyme catalyses 4-hydroxybenzoate + ATP + CoA = 4-hydroxybenzoyl-CoA + AMP + diphosphate. Its function is as follows. Ligase involved in the anaerobic degradation of 3-hydroxybenzoate (3OHBz). Catalyzes the activation of 3-hydroxybenzoate to 3-hydroxybenzoyl-CoA. Also shows high activity with protocatechuate and 4-hydroxybenzoate. Exhibits lower activity with benzoate, but cannot use 2-hydroxybenzoate or benzoate analogs containing other substituents at the ortho position, such as 2-aminobenzoate (anthranilate). In Aromatoleum sp. (strain CIB) (Azoarcus sp. (strain CIB)), this protein is 3-hydroxybenzoate--CoA ligase.